A 59-amino-acid chain; its full sequence is Protein translocase subunit SecE (59 aa).

A helical transmembrane segment spans residues 35–55; it reads IVAIGIAIIGVVGFIIVLIGE.

It belongs to the SecE/SEC61-gamma family. As to quaternary structure, component of the Sec protein translocase complex. Heterotrimer consisting of SecY (alpha), SecG (beta) and SecE (gamma) subunits. The heterotrimers can form oligomers, although 1 heterotrimer is thought to be able to translocate proteins. Interacts with the ribosome. May interact with SecDF, and other proteins may be involved.

The protein localises to the cell membrane. Its function is as follows. Essential subunit of the Sec protein translocation channel SecYEG. Clamps together the 2 halves of SecY. May contact the channel plug during translocation. The sequence is that of Protein translocase subunit SecE from Methanobrevibacter smithii (strain ATCC 35061 / DSM 861 / OCM 144 / PS).